Consider the following 181-residue polypeptide: Large ribosomal subunit protein uL5 (181 aa).

This sequence belongs to the universal ribosomal protein uL5 family. In terms of assembly, part of the 50S ribosomal subunit; part of the 5S rRNA/L5/L18/L25 subcomplex. Contacts the 5S rRNA and the P site tRNA. Forms a bridge to the 30S subunit in the 70S ribosome.

This is one of the proteins that bind and probably mediate the attachment of the 5S RNA into the large ribosomal subunit, where it forms part of the central protuberance. In the 70S ribosome it contacts protein S13 of the 30S subunit (bridge B1b), connecting the 2 subunits; this bridge is implicated in subunit movement. Contacts the P site tRNA; the 5S rRNA and some of its associated proteins might help stabilize positioning of ribosome-bound tRNAs. This is Large ribosomal subunit protein uL5 from Helicobacter pylori (strain P12).